Reading from the N-terminus, the 456-residue chain is MKGPNLNFRKTPSKDNGVKQVESLARPETPPPKFVEDSNLEFNVLASEKLPNYTNLDLFHRAVFPFMFLAQCVAIMPLVGIRESNPRRVRFAYKSIPMFVTLIFMIATSILFLSMFTHLLKIGITAKNFVGLVFFGCVLSAYVVFIRLAKKWPAVVRIWTRTEIPFTKPPYEIPKRNLSRRVQLAALAIIGLSLGEHALYQVSAILSYTRRIQMCANITTVPSFNNYMQTNYDYVFQLLPYSPIIAVLILLINGACTFVWNYMDLFIMMISKGLSYRFEQITTRIRKLEHEEVCESVFIQIREHYVKMCELLEFVDSAMSSLILLSCVNNLYFVCYQLLNVFNKLRWPINYIYFWYSLLYLIGRTAFVFLTAADINEESKRGLGVLRRVSSRSWCVEVERLIFQMTTQTVALSGKKFYFLTRRLLFGMAGTIVTYELVLLQFDEPNRRKGLQPLCA.

The tract at residues 1-30 (MKGPNLNFRKTPSKDNGVKQVESLARPETP) is disordered. Topologically, residues 1-91 (MKGPNLNFRK…RESNPRRVRF (91 aa)) are cytoplasmic. A helical transmembrane segment spans residues 92-114 (AYKSIPMFVTLIFMIATSILFLS). The Extracellular portion of the chain corresponds to 115–128 (MFTHLLKIGITAKN). A helical transmembrane segment spans residues 129–150 (FVGLVFFGCVLSAYVVFIRLAK). Gly131 serves as a coordination point for sucrose. The Cytoplasmic portion of the chain corresponds to 151–182 (KWPAVVRIWTRTEIPFTKPPYEIPKRNLSRRV). Residues 183-205 (QLAALAIIGLSLGEHALYQVSAI) traverse the membrane as a helical segment. Sucrose-binding residues include Glu196, His197, and Tyr234. The D-maltose site is built by Glu196, His197, Tyr234, Asn253, and Thr257. The Extracellular portion of the chain corresponds to 206 to 245 (LSYTRRIQMCANITTVPSFNNYMQTNYDYVFQLLPYSPII). Residues 246–271 (AVLILLINGACTFVWNYMDLFIMMIS) traverse the membrane as a helical segment. Thr257 lines the sucrose pocket. At 272–318 (KGLSYRFEQITTRIRKLEHEEVCESVFIQIREHYVKMCELLEFVDSA) the chain is on the cytoplasmic side. The helical transmembrane segment at 319 to 342 (MSSLILLSCVNNLYFVCYQLLNVF) threads the bilayer. The Extracellular portion of the chain corresponds to 343–350 (NKLRWPIN). A helical transmembrane segment spans residues 351 to 373 (YIYFWYSLLYLIGRTAFVFLTAA). Tyr353 is a sucrose binding site. Tyr353 is a D-maltose binding site. The Cytoplasmic segment spans residues 374-421 (DINEESKRGLGVLRRVSSRSWCVEVERLIFQMTTQTVALSGKKFYFLT). Residues 422 to 441 (RRLLFGMAGTIVTYELVLLQ) form a helical membrane-spanning segment. Residues 442 to 456 (FDEPNRRKGLQPLCA) lie on the Extracellular side of the membrane.

It belongs to the insect chemoreceptor superfamily. Gustatory receptor (GR) family. Gr5a subfamily. Homotetramer. As to expression, expressed in Gr5a-expressing sugar-sensing cells.

The protein resides in the cell membrane. One of the few identified sugar gustatory receptors identified so far and which promotes the starvation-induced increase of feeding motivation. Required in combination with Gr64f to detect sucrose, maltose, and glucose. The polypeptide is Gustatory receptor for sugar taste 64a (Gr64a) (Drosophila melanogaster (Fruit fly)).